A 381-amino-acid polypeptide reads, in one-letter code: 1-deoxy-D-xylulose 5-phosphate reductoisomerase (381 aa).

NADPH-binding residues include Ser-10, Gly-11, Ser-12, Ile-13, Gly-36, Lys-37, Asn-38, and Asn-121. Position 122 (Lys-122) interacts with 1-deoxy-D-xylulose 5-phosphate. Glu-123 is an NADPH binding site. Asp-147 is a binding site for Mn(2+). Ser-148, Glu-149, Ser-173, and His-196 together coordinate 1-deoxy-D-xylulose 5-phosphate. Residue Glu-149 participates in Mn(2+) binding. Gly-202 lines the NADPH pocket. 1-deoxy-D-xylulose 5-phosphate contacts are provided by Ser-209, Asn-214, Lys-215, and Glu-218. A Mn(2+)-binding site is contributed by Glu-218.

Belongs to the DXR family. Mg(2+) serves as cofactor. The cofactor is Mn(2+).

The catalysed reaction is 2-C-methyl-D-erythritol 4-phosphate + NADP(+) = 1-deoxy-D-xylulose 5-phosphate + NADPH + H(+). It participates in isoprenoid biosynthesis; isopentenyl diphosphate biosynthesis via DXP pathway; isopentenyl diphosphate from 1-deoxy-D-xylulose 5-phosphate: step 1/6. Its function is as follows. Catalyzes the NADPH-dependent rearrangement and reduction of 1-deoxy-D-xylulose-5-phosphate (DXP) to 2-C-methyl-D-erythritol 4-phosphate (MEP). The protein is 1-deoxy-D-xylulose 5-phosphate reductoisomerase of Geobacillus sp. (strain WCH70).